Here is a 137-residue protein sequence, read N- to C-terminus: Small ribosomal subunit protein uS19 (137 aa).

It belongs to the universal ribosomal protein uS19 family.

Its function is as follows. Protein S19 forms a complex with S13 that binds strongly to the 16S ribosomal RNA. The polypeptide is Small ribosomal subunit protein uS19 (Methanoculleus marisnigri (strain ATCC 35101 / DSM 1498 / JR1)).